A 446-amino-acid polypeptide reads, in one-letter code: Probable glycine dehydrogenase (decarboxylating) subunit 1 (446 aa).

This sequence belongs to the GcvP family. N-terminal subunit subfamily. In terms of assembly, the glycine cleavage system is composed of four proteins: P, T, L and H. In this organism, the P 'protein' is a heterodimer of two subunits.

The enzyme catalyses N(6)-[(R)-lipoyl]-L-lysyl-[glycine-cleavage complex H protein] + glycine + H(+) = N(6)-[(R)-S(8)-aminomethyldihydrolipoyl]-L-lysyl-[glycine-cleavage complex H protein] + CO2. The glycine cleavage system catalyzes the degradation of glycine. The P protein binds the alpha-amino group of glycine through its pyridoxal phosphate cofactor; CO(2) is released and the remaining methylamine moiety is then transferred to the lipoamide cofactor of the H protein. This is Probable glycine dehydrogenase (decarboxylating) subunit 1 from Protochlamydia amoebophila (strain UWE25).